We begin with the raw amino-acid sequence, 689 residues long: Beta-adrenergic receptor kinase 1 (689 aa).

Positions 1-190 are N-terminal; sequence MADLEAVLAD…ELNIHLTMND (190 aa). Positions 54-175 constitute an RGS domain; that stretch reads TFEKIFSQKL…IESDKFTRFC (122 aa). Residues 191-453 form the Protein kinase domain; the sequence is FSVHRIIGRG…AQEIKESPFF (263 aa). ATP-binding positions include 197 to 205 and lysine 220; that span reads IGRGGFGEV. Residue aspartate 317 is the Proton acceptor of the active site. The 68-residue stretch at 454-521 folds into the AGC-kinase C-terminal domain; the sequence is RSLDWQMVFL…TISERWQQEV (68 aa). The PH domain occupies 558–652; the sequence is DCIMHGYMSK…WKKELRDAYR (95 aa). A Phosphoserine modification is found at serine 670.

It belongs to the protein kinase superfamily. AGC Ser/Thr protein kinase family. GPRK subfamily. In terms of assembly, interacts with the heterodimer formed by GNB1 and GNG2. Interacts with GIT1. Interacts with, and phosphorylates chemokine-stimulated CCR5. Interacts with ARRB1. Interacts with LPAR1 and LPAR2. Interacts with RALA in response to LPAR1 activation. ADRBK1 and RALA mutually inhibit each other's binding to LPAR1. Interacts with ADRB2. As to expression, expressed at low levels in brain cortex, hippocampus, striatum, hypothalamus, cerebellum and brainstem (at protein level).

The protein resides in the cytoplasm. It is found in the cell membrane. The protein localises to the postsynapse. Its subcellular location is the presynapse. The enzyme catalyses [beta-adrenergic receptor] + ATP = [beta-adrenergic receptor]-phosphate + ADP + H(+). In contrast to other AGC family kinases, the catalytic activity is solely regulated by the binding of substrates and ligands, not by phosphorylation of the kinase domain. Functionally, specifically phosphorylates the agonist-occupied form of the beta-adrenergic and closely related receptors, probably inducing a desensitization of them. Key regulator of LPAR1 signaling. Competes with RALA for binding to LPAR1 thus affecting the signaling properties of the receptor. Desensitizes LPAR1 and LPAR2 in a phosphorylation-independent manner. Positively regulates ciliary smoothened (SMO)-dependent Hedgehog (Hh) signaling pathway by facilitating the trafficking of SMO into the cilium and the stimulation of SMO activity. Inhibits relaxation of airway smooth muscle in response to blue light. The polypeptide is Beta-adrenergic receptor kinase 1 (Rattus norvegicus (Rat)).